A 1073-amino-acid chain; its full sequence is MITQDTPALNPTEEHYLKRELLRCQLDYEIGKLNDQFALRKFGYPFSPNDPTAPQPISNNDSSPVLGGKGHFSVNYPMLSYVLQEFISTFPLLSTNLLVDEKFWQSKVQVFFEHFMSLGFSESYDREEASKRKKVSKKLSKVILLLFNSGVGSFQEQAYYNEDKFVLQSGQARKRSNIEKFAMPTRENLENLLTNESVFINGWDVNIISVFNKNSRKCTESVDNDKSSKSTPTSSPKSHAIKSFASTSKWMKNAFNNTINSTINSMPESSASLFSKLSLGVPSTKSKQSRKHHYFLIKIKKQDDDDQDNSNEENSNLDHHAGYFYVTRTYSDFKKLSHDLKSEFPGKKCPRLPHRNKKVTSMITKTEVLHNGQTKSAAREKIVNTFDTDLQSASESDNSSFLQTTNELSATETVLTEKETETLRKNILNEIKEEDNIDEDEYEEEGEGEESDFDEYKDASDSKINTLVGEKMRTSLRQYLRTLCKDAEVSQSSSIRRFFLSGPNLDIKDINPKIADDIRNRALIDVSNLENQIRFQQMALEKSLKLQDSMKDFKTSLLKDEKYLMSLLVEIKDNTKVEDLSPLLQDFVEWCKIYISSMIYQMFLGNDNSYELYTQIRRLHKLMPYTVMGQIMKFTNPIAIMRGMIELFMAQPFGGHSLLQTMFSTILTDDLKTQKVAIKELERKIAEMDPGASVVTKCLKDFVFNNDTKDEHDTKLFTMDAVNAESESMNMPVPLIVLMKSAAANLIPDEVVAGLIESYSSWKLQKEDTDALNVTSEDQSGIYFTHVKDLWQLYIKEHDKQLMRQLWQDPELTQMLKAIVTMIYEPMVKIFKVARMDVALKNFEKFMSDLIRLVDDVINGQLGVSTQFDVVEEIHNLVTKHQDAFFEFIHDVYLNDSEGIFEGFITWITTIVKFLQKSKFGGPSERIDFNKLICRDDIDIDVKLLKVQVNNVLNKKIGARKIYKKLLDLKVKQGTKQNNKHAAGILQKNWSDINSLVMPSSSGSFGLGDGDLVDLDLDTGDYDFLHKENEVELEKQYKDLLNLVVDESEIDKLRSQVFAQELKNYLEAQIAKK.

Residues 218–228 are compositionally biased toward basic and acidic residues; the sequence is CTESVDNDKSS. The disordered stretch occupies residues 218-240; that stretch reads CTESVDNDKSSKSTPTSSPKSHA. Residues 229–238 show a composition bias toward low complexity; sequence KSTPTSSPKS. The 234-residue stretch at 273-506 folds into the PX domain; that stretch reads LFSKLSLGVP…RFFLSGPNLD (234 aa). Phosphoserine is present on residues serine 310 and serine 451. Residues 431–456 form a disordered region; the sequence is IKEEDNIDEDEYEEEGEGEESDFDEY. Acidic residues predominate over residues 432 to 453; that stretch reads KEEDNIDEDEYEEEGEGEESDF.

It is found in the endoplasmic reticulum membrane. It localises to the lipid droplet. Its function is as follows. Phosphoinositide-binding protein that plays a role in regulation of ergosterol distribution in the cell. Facilitates ergosterol transport between plasma membrane and lipid droplets. This chain is PX domain-containing protein LEC1, found in Saccharomyces cerevisiae (strain ATCC 204508 / S288c) (Baker's yeast).